We begin with the raw amino-acid sequence, 436 residues long: GTPase Obg (436 aa).

Positions 2–160 (SMFLDTAKIK…RELQLELKIL (159 aa)) constitute an Obg domain. The OBG-type G domain occupies 161 to 338 (ADVGLVGFPS…LLDATAELLD (178 aa)). GTP contacts are provided by residues 167–174 (GFPSVGKS), 192–196 (FTTIV), 214–217 (DLPG), 284–287 (NKMD), and 319–321 (SGL). The Mg(2+) site is built by Ser174 and Thr194. The region spanning 358 to 436 (GFDEEEKAFE…IGKFEFEFVD (79 aa)) is the OCT domain.

It belongs to the TRAFAC class OBG-HflX-like GTPase superfamily. OBG GTPase family. As to quaternary structure, monomer. It depends on Mg(2+) as a cofactor.

The protein resides in the cytoplasm. In terms of biological role, an essential GTPase which binds GTP, GDP and possibly (p)ppGpp with moderate affinity, with high nucleotide exchange rates and a fairly low GTP hydrolysis rate. Plays a role in control of the cell cycle, stress response, ribosome biogenesis and in those bacteria that undergo differentiation, in morphogenesis control. This Streptococcus pneumoniae serotype 2 (strain D39 / NCTC 7466) protein is GTPase Obg.